The following is a 201-amino-acid chain: MTPTGLGYIPMVVEQSGRGERAYDIYSRLLRERLIFLVGPVNDATANLVVAQLLFLESENPDKDISFYINSPGGSVYAGMAIFDTMQFVKPDVSTLCTGLAASMGAFLLAAGKKGKRFSLPNSRIMIHQPSGGAQGQASDIQIQAKEILDLRERLNRILAENTGQSMERIAIDTERDTFMSAEDALSYGLVDKVLARREDV.

The active-site Nucleophile is the Ser-103. The active site involves His-128.

This sequence belongs to the peptidase S14 family. As to quaternary structure, fourteen ClpP subunits assemble into 2 heptameric rings which stack back to back to give a disk-like structure with a central cavity, resembling the structure of eukaryotic proteasomes.

It is found in the cytoplasm. It catalyses the reaction Hydrolysis of proteins to small peptides in the presence of ATP and magnesium. alpha-casein is the usual test substrate. In the absence of ATP, only oligopeptides shorter than five residues are hydrolyzed (such as succinyl-Leu-Tyr-|-NHMec, and Leu-Tyr-Leu-|-Tyr-Trp, in which cleavage of the -Tyr-|-Leu- and -Tyr-|-Trp bonds also occurs).. Its function is as follows. Cleaves peptides in various proteins in a process that requires ATP hydrolysis. Has a chymotrypsin-like activity. Plays a major role in the degradation of misfolded proteins. In Bordetella avium (strain 197N), this protein is ATP-dependent Clp protease proteolytic subunit.